Here is a 664-residue protein sequence, read N- to C-terminus: L-type lectin-domain containing receptor kinase I.3 (664 aa).

The signal sequence occupies residues 1-21; it reads MACRLYLALIFSCVYLICLSS. The Extracellular segment spans residues 22–286; it reads QQETGFVYNG…PKEEKKKLSP (265 aa). Positions 24-257 are legume-lectin like; the sequence is ETGFVYNGFE…NHYILGWSFS (234 aa). Asparagine 55, asparagine 125, asparagine 128, asparagine 181, asparagine 204, asparagine 225, and asparagine 267 each carry an N-linked (GlcNAc...) asparagine glycan. Residues 287–307 traverse the membrane as a helical segment; sequence LLIGLVILLVIPVVMVLGGVY. Residues 308–664 are Cytoplasmic-facing; that stretch reads WYRRKKYAEV…THTILDGHGR (357 aa). The region spanning 342–619 is the Protein kinase domain; that stretch reads FRKDCRVGKG…LNQDLPLPIF (278 aa). ATP-binding positions include 348-356 and lysine 370; that span reads VGKGGFGEV. The Proton acceptor role is filled by aspartate 466.

This sequence in the C-terminal section; belongs to the protein kinase superfamily. Ser/Thr protein kinase family. The protein in the N-terminal section; belongs to the leguminous lectin family. In terms of processing, autophosphorylated on Ser and Thr residues. Mostly expressed in roots and flowers, and, to a lower extent, in leaves.

It localises to the cell membrane. The enzyme catalyses L-seryl-[protein] + ATP = O-phospho-L-seryl-[protein] + ADP + H(+). The catalysed reaction is L-threonyl-[protein] + ATP = O-phospho-L-threonyl-[protein] + ADP + H(+). In terms of biological role, involved in resistance response to the pathogenic fungus Alternaria brassicicola. The polypeptide is L-type lectin-domain containing receptor kinase I.3 (Arabidopsis thaliana (Mouse-ear cress)).